The primary structure comprises 380 residues: O-phospho-L-seryl-tRNA:Cys-tRNA synthase (380 aa).

Residues 86 to 87 (AR), N192, and 215 to 217 (SGH) each bind pyridoxal 5'-phosphate. At K218 the chain carries N6-(pyridoxal phosphate)lysine.

Belongs to the SepCysS family. Homodimer. Interacts with SepRS. It depends on pyridoxal 5'-phosphate as a cofactor.

It carries out the reaction O-phospho-L-seryl-tRNA(Cys) + hydrogen sulfide + H(+) = L-cysteinyl-tRNA(Cys) + phosphate. Its function is as follows. Converts O-phospho-L-seryl-tRNA(Cys) (Sep-tRNA(Cys)) to L-cysteinyl-tRNA(Cys) (Cys-tRNA(Cys)). The polypeptide is O-phospho-L-seryl-tRNA:Cys-tRNA synthase (Methanococcus maripaludis (strain C7 / ATCC BAA-1331)).